The chain runs to 325 residues: Heat-inducible transcription repressor HrcA (325 aa).

It belongs to the HrcA family.

In terms of biological role, negative regulator of class I heat shock genes (grpE-dnaK-dnaJ and groELS operons). Prevents heat-shock induction of these operons. In Staphylococcus haemolyticus (strain JCSC1435), this protein is Heat-inducible transcription repressor HrcA.